Reading from the N-terminus, the 95-residue chain is Co-chaperonin GroES (95 aa).

It belongs to the GroES chaperonin family. Heptamer of 7 subunits arranged in a ring. Interacts with the chaperonin GroEL.

Its subcellular location is the cytoplasm. Its function is as follows. Together with the chaperonin GroEL, plays an essential role in assisting protein folding. The GroEL-GroES system forms a nano-cage that allows encapsulation of the non-native substrate proteins and provides a physical environment optimized to promote and accelerate protein folding. GroES binds to the apical surface of the GroEL ring, thereby capping the opening of the GroEL channel. In Desulfatibacillum aliphaticivorans, this protein is Co-chaperonin GroES.